We begin with the raw amino-acid sequence, 143 residues long: Papain inhibitor (143 aa).

The signal sequence occupies residues 1 to 33 (MREFRRVRRVRFAACALVAAATGITLAAGPASA).

As to quaternary structure, monomer.

The protein localises to the secreted. In terms of biological role, stress protein produced under hyperthermal stress conditions. Serves as a glutamine and lysine donor substrate for transglutaminase. Inhibits the cysteine proteases papain and bromelain as well as the bovine serine protease trypsin. Has hardly any or no effect on subtilisin, bovine chymotrypsin, proteinase K from T.album, transglutaminase-activating metalloproteinase (TAMEP) from S.mobaraensis, dispase from B.polymyxa, thermolysin from B.thermoproteolyticus or collagenase from C.histolyticum. This Streptomyces mobaraensis (Streptoverticillium mobaraense) protein is Papain inhibitor (pi).